Here is a 701-residue protein sequence, read N- to C-terminus: Elongation factor G 1 (701 aa).

One can recognise a tr-type G domain in the interval 13 to 288 (KYTRNIGIMA…GVIDYLPSPL (276 aa)). GTP is bound by residues 22-29 (AHIDAGKT), 86-90 (DTPGH), and 140-143 (NKMD).

Belongs to the TRAFAC class translation factor GTPase superfamily. Classic translation factor GTPase family. EF-G/EF-2 subfamily.

Its subcellular location is the cytoplasm. Catalyzes the GTP-dependent ribosomal translocation step during translation elongation. During this step, the ribosome changes from the pre-translocational (PRE) to the post-translocational (POST) state as the newly formed A-site-bound peptidyl-tRNA and P-site-bound deacylated tRNA move to the P and E sites, respectively. Catalyzes the coordinated movement of the two tRNA molecules, the mRNA and conformational changes in the ribosome. This Bdellovibrio bacteriovorus (strain ATCC 15356 / DSM 50701 / NCIMB 9529 / HD100) protein is Elongation factor G 1.